Consider the following 1131-residue polypeptide: PolyA-specific ribonuclease subunit panl-2 (1131 aa).

The USP domain occupies 489–864 (VTMQSTHGMN…LPALLAYKKK (376 aa)). An Exonuclease domain is found at 909–1074 (VGLDAEFIKI…VDARYALKLY (166 aa)). Polar residues predominate over residues 1104–1115 (QTSSPLVVSTTR). Residues 1104 to 1131 (QTSSPLVVSTTRKTPEDTNPADAAPKSV) are disordered.

In Caenorhabditis elegans, this protein is PolyA-specific ribonuclease subunit panl-2.